The sequence spans 491 residues: MKNKEIIINNYLNLENNYIKLPKKLFSEQNPSEVPSTNLVVFNESLASDLGLSEEFLQSDDGINFLSGNKILEDTIPIAQAYAGHQFGHFTMLGDGRAILLGELKSQNGERFDIQLKGSGRTPYSRGGDGKATLGAMLREYIISEGMHGLGIPTTRSLAVVSTGEDVIREEILKGAVLTRIAKSHIRVGTFQFISNYGTIEELKALADYTLNRHLKKAEYEGNPYIYLLNEVIKSQAKLISKWQLVGFVHGVMNTDNVTISGETIDYGPCAFMDVYDPDTVFSSIDINGRYAYGNQPKIGVWNLARFAETLLPLLDEDLESAVEIAQNSISKYSDLYNKYWYTGMRAKLGIFNEKEEDKELIQSLLTMMKRFKADYTNTFSNLTLGNLSDIDMFASKEFKMWYEVWKERLKSQNQSSEESKMLMEKSNPTIIPRNNRVEEALVAAIKDSDYSVMQSLLDVLKNPYDYSSINEYYSIVPKSTSCTYKTYCGT.

ATP-binding residues include G94, G96, R97, K117, D129, G130, R180, and R187. D256 functions as the Proton acceptor in the catalytic mechanism. Mg(2+) is bound by residues N257 and D266. Residue D266 participates in ATP binding.

This sequence belongs to the SELO family. Mg(2+) serves as cofactor. Requires Mn(2+) as cofactor.

The enzyme catalyses L-seryl-[protein] + ATP = 3-O-(5'-adenylyl)-L-seryl-[protein] + diphosphate. It carries out the reaction L-threonyl-[protein] + ATP = 3-O-(5'-adenylyl)-L-threonyl-[protein] + diphosphate. The catalysed reaction is L-tyrosyl-[protein] + ATP = O-(5'-adenylyl)-L-tyrosyl-[protein] + diphosphate. It catalyses the reaction L-histidyl-[protein] + UTP = N(tele)-(5'-uridylyl)-L-histidyl-[protein] + diphosphate. The enzyme catalyses L-seryl-[protein] + UTP = O-(5'-uridylyl)-L-seryl-[protein] + diphosphate. It carries out the reaction L-tyrosyl-[protein] + UTP = O-(5'-uridylyl)-L-tyrosyl-[protein] + diphosphate. Functionally, nucleotidyltransferase involved in the post-translational modification of proteins. It can catalyze the addition of adenosine monophosphate (AMP) or uridine monophosphate (UMP) to a protein, resulting in modifications known as AMPylation and UMPylation. The chain is Protein nucleotidyltransferase YdiU from Clostridium botulinum (strain Alaska E43 / Type E3).